The chain runs to 473 residues: Photosystem II CP43 reaction center protein (473 aa).

A propeptide spanning residues 1-14 (MKTLYSLRRFYHVE) is cleaved from the precursor. An N-acetylthreonine modification is found at Thr15. Thr15 carries the phosphothreonine modification. Transmembrane regions (helical) follow at residues 69–93 (LFEVAHFVPEKPMYEQGLILLPHLA), 134–155 (LLGPETLEESFPFFGYVWKDRN), 178–200 (KALYFGGVYDTWAPGGGDVRKIT), 255–275 (KPFAWARRALVWSGEAYLSYS), and 291–312 (WFNNTAYPSEFYGPTGPEASQA). [CaMn4O5] cluster is bound at residue Glu367. Residues 447–471 (RARAAAAGFEKGIDRDFEPVLSMTP) form a helical membrane-spanning segment.

This sequence belongs to the PsbB/PsbC family. PsbC subfamily. As to quaternary structure, PSII is composed of 1 copy each of membrane proteins PsbA, PsbB, PsbC, PsbD, PsbE, PsbF, PsbH, PsbI, PsbJ, PsbK, PsbL, PsbM, PsbT, PsbX, PsbY, PsbZ, Psb30/Ycf12, at least 3 peripheral proteins of the oxygen-evolving complex and a large number of cofactors. It forms dimeric complexes. Binds multiple chlorophylls and provides some of the ligands for the Ca-4Mn-5O cluster of the oxygen-evolving complex. It may also provide a ligand for a Cl- that is required for oxygen evolution. PSII binds additional chlorophylls, carotenoids and specific lipids. serves as cofactor.

Its subcellular location is the plastid. The protein resides in the chloroplast thylakoid membrane. One of the components of the core complex of photosystem II (PSII). It binds chlorophyll and helps catalyze the primary light-induced photochemical processes of PSII. PSII is a light-driven water:plastoquinone oxidoreductase, using light energy to abstract electrons from H(2)O, generating O(2) and a proton gradient subsequently used for ATP formation. In Arabis hirsuta (Hairy rock-cress), this protein is Photosystem II CP43 reaction center protein.